A 465-amino-acid chain; its full sequence is Pleckstrin homology domain-containing family S member 1 (465 aa).

The 116-residue stretch at 14–129 (EVCKQDYFIK…WVSFMSSFRQ (116 aa)) folds into the PH domain. The span at 159–173 (PSSTSEAVGSSSPRN) shows a compositional bias: polar residues. Disordered regions lie at residues 159-179 (PSST…QDKH) and 258-283 (ETSH…GDLH). Residues 258-271 (ETSHESVDSSKEEP) are compositionally biased toward basic and acidic residues.

This Homo sapiens (Human) protein is Pleckstrin homology domain-containing family S member 1.